Consider the following 87-residue polypeptide: DNA-directed RNA polymerase subunit omega (87 aa).

Belongs to the RNA polymerase subunit omega family. As to quaternary structure, the RNAP catalytic core consists of 2 alpha, 1 beta, 1 beta' and 1 omega subunit. When a sigma factor is associated with the core the holoenzyme is formed, which can initiate transcription.

The enzyme catalyses RNA(n) + a ribonucleoside 5'-triphosphate = RNA(n+1) + diphosphate. In terms of biological role, promotes RNA polymerase assembly. Latches the N- and C-terminal regions of the beta' subunit thereby facilitating its interaction with the beta and alpha subunits. In Acidothermus cellulolyticus (strain ATCC 43068 / DSM 8971 / 11B), this protein is DNA-directed RNA polymerase subunit omega.